The following is an 863-amino-acid chain: Desmocollin-2 (863 aa).

Residues 1-89 (KFIGRVNLKE…QEKVLRRAKR (89 aa)) constitute a propeptide that is removed on maturation. Cadherin domains are found at residues 90 to 197 (RWAP…APIF), 198 to 309 (TETS…LPTF), 310 to 423 (TRSS…GPEC), 424 to 528 (DPRV…VIPQ), and 529 to 644 (RTVV…ILGK). Residues 90 to 644 (RWAPIPCSVP…TGNREVILGK (555 aa)) are Extracellular-facing. Residue Asn-120 is glycosylated (N-linked (GlcNAc...) asparagine). N-linked (GlcNAc...) asparagine glycosylation is found at Asn-346, Asn-495, and Asn-579. The helical transmembrane segment at 645-665 (WAILAILLGIALLFCILFTLV) threads the bilayer. At 666-863 (CGATTGADKK…RTLAETCMKR (198 aa)) the chain is on the cytoplasmic side. A phosphoserine mark is found at Ser-826, Ser-830, and Ser-835.

In terms of assembly, interacts with DSP, PKP2 and JUP. Interacts with DSG3; the interaction may limit the interaction of DSC3 with p38MAPK family members and therefore repress p38MAPK signaling activation. In terms of tissue distribution, expressed in esophagus and rumen. Weakly expressed in epithelia and cardiac muscle.

The protein resides in the cell membrane. It is found in the cell junction. Its subcellular location is the desmosome. A component of desmosome cell-cell junctions which are required for positive regulation of cellular adhesion. Promotes timely incorporation of DSG2 into desmosome intercellular junctions and promotes interaction of desmosome cell junctions with intermediate filament cytokeratin, via modulation of DSP phosphorylation. Plays an important role in desmosome-mediated maintenance of intestinal epithelial cell intercellular adhesion strength and barrier function. Positively regulates wound healing of intestinal mucosa via promotion of epithelial cell migration, and also plays a role in mechanotransduction of force between intestinal epithelial cells and extracellular matrix. May contribute to epidermal cell positioning (stratification) by mediating differential adhesiveness between cells that express different isoforms. This is Desmocollin-2 (DSC2) from Bos taurus (Bovine).